The chain runs to 360 residues: Diacylglycerol O-acyltransferase 3 (360 aa).

Residues 153–182 are disordered; sequence KAKAMKKMTEMDSESSSSSESSDSDCDKGK. Residues C265, C270, C298, and C302 each coordinate [2Fe-2S] cluster.

The protein belongs to the diacylglycerol acyltransferase family. The cofactor is [2Fe-2S] cluster.

The enzyme catalyses an acyl-CoA + a 1,2-diacyl-sn-glycerol = a triacyl-sn-glycerol + CoA. It functions in the pathway glycerolipid metabolism; triacylglycerol biosynthesis. Involved in triacylglycerol (TAG) biosynthesis. Catalyzes the acylation of the sn-3 hydroxy group of sn-1,2-diacylglycerol using acyl-CoA. May preferentially use linolenoyl-CoA as substrate and to a lesser extent linoleoyl-CoA. May contribute to the active recycling of linoleate and linolenate into TAG when seed oil breakdown is blocked. The chain is Diacylglycerol O-acyltransferase 3 from Arabidopsis thaliana (Mouse-ear cress).